Reading from the N-terminus, the 2281-residue chain is Retinal-specific phospholipid-transporting ATPase ABCA4 (2281 aa).

Residues 1 to 24 are Cytoplasmic-facing; that stretch reads MGFARQIKLLLWKNWTLRKRQKIR. Residues 25-45 form a helical membrane-spanning segment; the sequence is FVVELVWPLSLFLVLIWLRNV. At 46–646 the chain is on the extracellular side; that stretch reads NPLYSKHECH…MPYPCFVDDS (601 aa). Intrachain disulfides connect cysteine 54–cysteine 81 and cysteine 75–cysteine 324. Asparagine 98 carries an N-linked (GlcNAc...) asparagine glycan. Residues serine 336 and asparagine 338 each contribute to the Mg(2+) site. Cysteine 370 and cysteine 519 are disulfide-bonded. Residues asparagine 415 and asparagine 504 are each glycosylated (N-linked (Hex...) asparagine). An N-all-trans-retinylidenephosphatidylethanolamine is bound by residues arginine 587 and arginine 653. Disulfide bonds link cysteine 641/cysteine 1488, cysteine 1442/cysteine 1453, and cysteine 1486/cysteine 1500. Residues 647-667 traverse the membrane as a helical segment; sequence FMIILNRCFPIFMVLAWIYSV. At 668-699 the chain is on the cytoplasmic side; the sequence is SMTVKSIVLEKELRLKETLKNQGVSNRVIWCT. A helical membrane pass occupies residues 700-720; it reads WFLDSFSIMSMSICLLTIFIM. The Extracellular portion of the chain corresponds to 721–730; it reads HGRILHYSNP. Residues 731 to 751 traverse the membrane as a helical segment; it reads FILFLFLLAFSIATIMQCFLL. Residues 752 to 759 lie on the Cytoplasmic side of the membrane; the sequence is STFFSRAS. Residues 760–780 form a helical membrane-spanning segment; it reads LAAACSGVIYFTLYLPHILCF. The Extracellular portion of the chain corresponds to 781–835; the sequence is AWQDRITADMKMAVSLLSPVAFGFGTEYLARFEEQGVGLQWSNIGNSPMEGDEFS. A helical transmembrane segment spans residues 836-856; that stretch reads FLMSMKMMLLDAALYGLLAWY. Topologically, residues 857–1374 are cytoplasmic; it reads LDQVFPGDYG…IRSHKDFLAQ (518 aa). Position 901 is a phosphothreonine (threonine 901). Residues 929 to 1160 form the ABC transporter 1 domain; that stretch reads VCVKNLVKIF…FGTGFYLTLV (232 aa). ATP contacts are provided by phenylalanine 938, glycine 966, and lysine 969. Threonine 970 lines the Mg(2+) pocket. Threonine 971, glutamine 1010, lysine 1054, glycine 1064, glycine 1065, and histidine 1118 together coordinate ATP. Residue serine 1185 is modified to Phosphoserine. The disordered stretch occupies residues 1295 to 1340; sequence ENINLRHPCSGPSEKAGQTPQGSSSHPREPAAHPEGQPPPEREGHS. Polar residues predominate over residues 1310–1319; the sequence is AGQTPQGSSS. Threonine 1313 carries the phosphothreonine modification. 2 positions are modified to phosphoserine: serine 1317 and serine 1319. Residues 1375-1395 traverse the membrane as a helical segment; that stretch reads IVLPATFVFLALMLSLIIPPF. Topologically, residues 1396 to 1679 are extracellular; sequence GEYPALTLHP…TVLTTSVDAV (284 aa). Asparagine 1455 carries N-linked (Hex...) asparagine glycosylation. Residue asparagine 1527 is glycosylated (N-linked (Hex...) asparagine). An N-linked (GlcNAc...) asparagine glycan is attached at asparagine 1586. N-linked (Hex...) asparagine glycosylation occurs at asparagine 1660. The chain crosses the membrane as a helical span at residues 1680–1700; it reads VAICVIFAMSFVPASFVLYLI. Over 1701-1725 the chain is Cytoplasmic; that stretch reads QERVNKAKHLQFVSGVSPTTYWLTN. Residues 1726–1746 form a helical membrane-spanning segment; sequence FLWDIMNYTVSAALVVGIFIG. Over 1747 to 1757 the chain is Extracellular; sequence FQKKAYTSSEN. The helical transmembrane segment at 1758–1778 threads the bilayer; the sequence is LPALVALLMLYGWAVIPMMYP. Residues 1779-1790 lie on the Cytoplasmic side of the membrane; that stretch reads ASFLFDIPSTAY. The helical transmembrane segment at 1791–1811 threads the bilayer; it reads VALSCANLFIGINSSAITFVL. At 1812–1829 the chain is on the extracellular side; the sequence is ELFENNRTLLRINAMLRK. Asparagine 1817 carries N-linked (GlcNAc...) asparagine glycosylation. The chain crosses the membrane as a helical span at residues 1830 to 1850; it reads LLIIFPHFCLGRGLIDLALSQ. Residues 1851–1879 lie on the Cytoplasmic side of the membrane; that stretch reads AVTDVYARFGEEHSSNPFQWDLIGKNLAA. A helical membrane pass occupies residues 1880-1900; that stretch reads MAVEGVVYFLLTLLIQYQFFF. At 1901–2281 the chain is on the extracellular side; sequence SRWTTEPAKE…VDKGNSAPQG (381 aa). The N-linked (GlcNAc...) asparagine glycan is linked to asparagine 1931. The 233-residue stretch at 1936–2168 folds into the ABC transporter 2 domain; the sequence is LRLNELTKVY…FGDGYIVTMK (233 aa). ATP-binding residues include asparagine 1972, glycine 1973, lysine 1976, threonine 1977, and threonine 1978. Threonine 1977 is a Mg(2+) binding site. N-linked (GlcNAc...) asparagine glycosylation is found at asparagine 2004 and asparagine 2050. Glycine 2071 provides a ligand contact to ATP. An essential for ATP binding and ATPase activity region spans residues 2242 to 2247; that stretch reads VFVNFA. An N-linked (GlcNAc...) asparagine glycan is attached at asparagine 2251. Positions 2262–2281 are disordered; it reads AAGASRQAKEVDKGNSAPQG.

Post-translationally, N-glycosylated. In terms of processing, proteolytic cleavage by trypsin leads to a 120-kDa N-terminal fragment and a 115-kDa C-terminal fragment that are linked through disulfide bonds. Phosphorylation is independent of light exposure and modulates ATPase activity. As to expression, expressed in retina namely in the periphery and incisures of the rod outer segments (ROS).

The protein localises to the membrane. Its subcellular location is the cell projection. It is found in the cilium. The protein resides in the photoreceptor outer segment. It localises to the cytoplasmic vesicle. The protein localises to the endoplasmic reticulum. It catalyses the reaction ATP + H2O + phospholipidSide 1 = ADP + phosphate + phospholipidSide 2.. It carries out the reaction an N-all-trans-retinylidenephosphatidylethanolamine(out) + ATP + H2O = an N-all-trans-retinylidenephosphatidylethanolamine(in) + ADP + phosphate + H(+). The enzyme catalyses a 1,2-diacyl-sn-glycero-3-phosphoethanolamine(out) + ATP + H2O = a 1,2-diacyl-sn-glycero-3-phosphoethanolamine(in) + ADP + phosphate + H(+). The catalysed reaction is N-11-cis-retinylidenephosphatidylethanolamine(out) + ATP + H2O = N-11-cis-retinylidenephosphatidylethanolamine(in) + ADP + phosphate + H(+). It catalyses the reaction ATP + H2O = ADP + phosphate + H(+). With respect to regulation, all-trans-retinal transport activity is reduced by EDTA chelation of Mg2+. All-trans-retinal transport activity is inhibited by N-ethylmaleimide (NEM). Phosphatidylethanolamine transport is strongly inhibited by beryllium fluoride and NEM. Its function is as follows. Flippase that catalyzes in an ATP-dependent manner the transport of retinal-phosphatidylethanolamine conjugates like the 11-cis and all-trans isomers of N-retinylidene-phosphatidylethanolamine from the lumen to the cytoplasmic leaflet of photoreceptor outer segment disk membranes, where N-cis-retinylidene-phosphatidylethanolamine (N-cis-R-PE) is then isomerized to its all-trans isomer (N-trans-R-PE) and reduced by RDH8 to produce all-trans-retinol (all-trans-rol) and therefore prevents the accumulation of excess of 11-cis-retinal and its schiff-base conjugate and the formation of toxic bisretinoid. Displays both ATPase and GTPase activity that is strongly influenced by the lipid environment and the presence of retinoid compounds. Binds the unprotonated form of N-retinylidene-phosphatidylethanolamine with high affinity in the absence of ATP and ATP binding and hydrolysis induce a protein conformational change that causes the dissociation of N-retinylidene-phosphatidylethanolamine. In Bos taurus (Bovine), this protein is Retinal-specific phospholipid-transporting ATPase ABCA4.